Reading from the N-terminus, the 191-residue chain is Glycerol-3-phosphate acyltransferase (191 aa).

The next 5 helical transmembrane spans lie at 5–25, 51–71, 78–98, 114–134, and 153–173; these read IILILSYVIGSIPFSLIIAKI, LAVLALFLDSLKGFVAVYTAQ, DLYIYVSAILAVLGHMFPIWL, IALNISIALAFVFVWLIVFFI, and SFFFQKELFLILLTVAILIFL.

It belongs to the PlsY family. Probably interacts with PlsX.

The protein localises to the cell membrane. It catalyses the reaction an acyl phosphate + sn-glycerol 3-phosphate = a 1-acyl-sn-glycero-3-phosphate + phosphate. It functions in the pathway lipid metabolism; phospholipid metabolism. Functionally, catalyzes the transfer of an acyl group from acyl-phosphate (acyl-PO(4)) to glycerol-3-phosphate (G3P) to form lysophosphatidic acid (LPA). This enzyme utilizes acyl-phosphate as fatty acyl donor, but not acyl-CoA or acyl-ACP. This Wolbachia pipientis subsp. Culex pipiens (strain wPip) protein is Glycerol-3-phosphate acyltransferase.